The sequence spans 338 residues: (-)-alpha-amorphene synthase ((2E,6E)-farnesyl diphosphate cyclizing) (338 aa).

Mg(2+) is bound by residues aspartate 105 and glutamate 109. The DDXXE motif signature appears at 105 to 109; the sequence is DDRAE. Position 196 (arginine 196) interacts with substrate. Serine 246 is a Mg(2+) binding site. Residue lysine 249 coordinates substrate. Glutamate 250 contacts Mg(2+). 327-328 provides a ligand contact to substrate; that stretch reads RY.

The protein belongs to the terpene synthase family. Mg(2+) is required as a cofactor.

The enzyme catalyses (2E,6E)-farnesyl diphosphate = (-)-alpha-amorphene + diphosphate. It participates in secondary metabolite biosynthesis; terpenoid biosynthesis. Its function is as follows. Catalyzes the conversion of (2E,6E)-farnesyl diphosphate (FPP) to yield the bicyclic sesquiterpene (1R,6S,7S)-(-)-alpha-amorphene via a probable 1,6-cyclization, which could involve the abstraction of the pyrophosphate from FPP to yield a (R)-bisabolyl cation. The only accepted substrate is (2E,6E)-farnesyl diphosphate (FPP). In Streptomyces viridochromogenes (strain DSM 40736 / JCM 4977 / BCRC 1201 / Tue 494), this protein is (-)-alpha-amorphene synthase ((2E,6E)-farnesyl diphosphate cyclizing).